The sequence spans 334 residues: Protein-methionine-sulfoxide reductase catalytic subunit MsrP (334 aa).

A signal peptide (tat-type signal) is located at residues 1-44 (MKKNQFLKESDVTAESVFFMKRRQVLKALGISAAALSLPHAAHA). Mo-molybdopterin-binding positions include asparagine 88, 91-92 (YE), cysteine 146, threonine 181, asparagine 233, arginine 238, and 249-251 (GIK).

This sequence belongs to the MsrP family. Heterodimer of a catalytic subunit (MsrP) and a heme-binding subunit (MsrQ). Mo-molybdopterin serves as cofactor. Post-translationally, predicted to be exported by the Tat system. The position of the signal peptide cleavage has not been experimentally proven.

The protein resides in the periplasm. It carries out the reaction L-methionyl-[protein] + a quinone + H2O = L-methionyl-(S)-S-oxide-[protein] + a quinol. It catalyses the reaction L-methionyl-[protein] + a quinone + H2O = L-methionyl-(R)-S-oxide-[protein] + a quinol. In terms of biological role, part of the MsrPQ system that repairs oxidized periplasmic proteins containing methionine sulfoxide residues (Met-O), using respiratory chain electrons. Thus protects these proteins from oxidative-stress damage caused by reactive species of oxygen and chlorine generated by the host defense mechanisms. MsrPQ is essential for the maintenance of envelope integrity under bleach stress, rescuing a wide series of structurally unrelated periplasmic proteins from methionine oxidation, including the primary periplasmic chaperone SurA and the lipoprotein Pal. The catalytic subunit MsrP is non-stereospecific, being able to reduce both (R-) and (S-) diastereoisomers of methionine sulfoxide. This chain is Protein-methionine-sulfoxide reductase catalytic subunit MsrP, found in Escherichia coli O127:H6 (strain E2348/69 / EPEC).